The primary structure comprises 334 residues: Isopentenyl-diphosphate delta-isomerase (334 aa).

5–6 contacts substrate; it reads RK. Residues 60–62, Ser90, and Asn117 each bind FMN; that span reads AMT. Residue Gln147 coordinates substrate. Glu148 contacts Mg(2+). Residues Lys179, Ser204, Thr209, 253–255, and 274–275 each bind FMN; these read GVR and SR.

The protein belongs to the IPP isomerase type 2 family. Homooctamer. Dimer of tetramers. FMN is required as a cofactor. It depends on NADPH as a cofactor. The cofactor is Mg(2+).

The protein resides in the cytoplasm. It carries out the reaction isopentenyl diphosphate = dimethylallyl diphosphate. Involved in the biosynthesis of isoprenoids. Catalyzes the 1,3-allylic rearrangement of the homoallylic substrate isopentenyl (IPP) to its allylic isomer, dimethylallyl diphosphate (DMAPP). This chain is Isopentenyl-diphosphate delta-isomerase, found in Streptococcus gordonii (strain Challis / ATCC 35105 / BCRC 15272 / CH1 / DL1 / V288).